A 406-amino-acid chain; its full sequence is Outer membrane protein assembly factor BamB (406 aa).

The signal sequence occupies residues 1-23 (MMKQVDMYKRVALIALMGMSLAG). Cysteine 24 carries the N-palmitoyl cysteine lipid modification. A lipid anchor (S-diacylglycerol cysteine) is attached at cysteine 24.

This sequence belongs to the BamB family. As to quaternary structure, part of the Bam complex.

It localises to the cell outer membrane. Its function is as follows. Part of the outer membrane protein assembly complex, which is involved in assembly and insertion of beta-barrel proteins into the outer membrane. The polypeptide is Outer membrane protein assembly factor BamB (Xanthomonas campestris pv. campestris (strain ATCC 33913 / DSM 3586 / NCPPB 528 / LMG 568 / P 25)).